The chain runs to 735 residues: Phosphoribosylformylglycinamidine synthase subunit PurL (735 aa).

Residue histidine 50 is part of the active site. The ATP site is built by tyrosine 53 and lysine 92. Residue glutamate 94 participates in Mg(2+) binding. Substrate-binding positions include 95–98 and arginine 117; that span reads SHNH. Residue histidine 96 is the Proton acceptor of the active site. Aspartate 118 provides a ligand contact to Mg(2+). Glutamine 241 serves as a coordination point for substrate. Aspartate 269 contributes to the Mg(2+) binding site. A substrate-binding site is contributed by 313–315; that stretch reads ESQ. Residues aspartate 495 and glycine 532 each contribute to the ATP site. Asparagine 533 lines the Mg(2+) pocket. A substrate-binding site is contributed by serine 535.

It belongs to the FGAMS family. As to quaternary structure, monomer. Part of the FGAM synthase complex composed of 1 PurL, 1 PurQ and 2 PurS subunits.

It localises to the cytoplasm. The enzyme catalyses N(2)-formyl-N(1)-(5-phospho-beta-D-ribosyl)glycinamide + L-glutamine + ATP + H2O = 2-formamido-N(1)-(5-O-phospho-beta-D-ribosyl)acetamidine + L-glutamate + ADP + phosphate + H(+). It participates in purine metabolism; IMP biosynthesis via de novo pathway; 5-amino-1-(5-phospho-D-ribosyl)imidazole from N(2)-formyl-N(1)-(5-phospho-D-ribosyl)glycinamide: step 1/2. Part of the phosphoribosylformylglycinamidine synthase complex involved in the purines biosynthetic pathway. Catalyzes the ATP-dependent conversion of formylglycinamide ribonucleotide (FGAR) and glutamine to yield formylglycinamidine ribonucleotide (FGAM) and glutamate. The FGAM synthase complex is composed of three subunits. PurQ produces an ammonia molecule by converting glutamine to glutamate. PurL transfers the ammonia molecule to FGAR to form FGAM in an ATP-dependent manner. PurS interacts with PurQ and PurL and is thought to assist in the transfer of the ammonia molecule from PurQ to PurL. The chain is Phosphoribosylformylglycinamidine synthase subunit PurL from Bartonella henselae (strain ATCC 49882 / DSM 28221 / CCUG 30454 / Houston 1) (Rochalimaea henselae).